Consider the following 218-residue polypeptide: Deoxyribose-phosphate aldolase (218 aa).

Residue D92 is the Proton donor/acceptor of the active site. The active-site Schiff-base intermediate with acetaldehyde is K156. K185 serves as the catalytic Proton donor/acceptor.

The protein belongs to the DeoC/FbaB aldolase family. DeoC type 1 subfamily.

The protein resides in the cytoplasm. It carries out the reaction 2-deoxy-D-ribose 5-phosphate = D-glyceraldehyde 3-phosphate + acetaldehyde. It functions in the pathway carbohydrate degradation; 2-deoxy-D-ribose 1-phosphate degradation; D-glyceraldehyde 3-phosphate and acetaldehyde from 2-deoxy-alpha-D-ribose 1-phosphate: step 2/2. Functionally, catalyzes a reversible aldol reaction between acetaldehyde and D-glyceraldehyde 3-phosphate to generate 2-deoxy-D-ribose 5-phosphate. The sequence is that of Deoxyribose-phosphate aldolase from Desulfitobacterium hafniense (strain Y51).